The chain runs to 94 residues: Small ribosomal subunit protein uS19c (94 aa).

The protein belongs to the universal ribosomal protein uS19 family.

The protein localises to the plastid. The protein resides in the chloroplast. In terms of biological role, protein S19 forms a complex with S13 that binds strongly to the 16S ribosomal RNA. This Cyanidioschyzon merolae (strain NIES-3377 / 10D) (Unicellular red alga) protein is Small ribosomal subunit protein uS19c.